We begin with the raw amino-acid sequence, 491 residues long: Trypanothione reductase (491 aa).

35-51 (DLQKHHGPPHYAALGGT) contributes to the FAD binding site. A disulfide bond links Cys-52 and Cys-57. His-461 serves as the catalytic Proton acceptor.

Belongs to the class-I pyridine nucleotide-disulfide oxidoreductase family. In terms of assembly, homodimer. FAD serves as cofactor. Post-translationally, the N-terminus is blocked.

It is found in the cytoplasm. The enzyme catalyses trypanothione + NADP(+) = trypanothione disulfide + NADPH + H(+). Its function is as follows. Trypanothione is the parasite analog of glutathione; this enzyme is the equivalent of glutathione reductase. The polypeptide is Trypanothione reductase (TPR) (Crithidia fasciculata).